The following is a 742-amino-acid chain: Zinc transporter ZIP6 (742 aa).

At 1–353 (MMTFLCTRSG…QRNTPVYIAW (353 aa)) the chain is on the extracellular side. 2 N-linked (GlcNAc...) asparagine glycosylation sites follow: asparagine 94 and asparagine 127. 2 disordered regions span residues 148-182 (PVTT…SQSD) and 191-210 (MNQE…RSRR). Basic and acidic residues predominate over residues 152-165 (KKGDMDHSVEKSDP). Residues 192 to 206 (NQESTTALTTPSYVT) show a composition bias toward polar residues. Residues asparagine 212, asparagine 232, and asparagine 237 are each glycosylated (N-linked (GlcNAc...) asparagine). Residues 220-260 (TQDHASFSPSQPNVTHSNHTHHDEDTPTHQHDDHDEHEHAR) are disordered. A compositionally biased stretch (polar residues) spans 222 to 236 (DHASFSPSQPNVTHS). A compositionally biased stretch (basic and acidic residues) spans 239–260 (THHDEDTPTHQHDDHDEHEHAR). Residues asparagine 267 and asparagine 337 are each glycosylated (N-linked (GlcNAc...) asparagine). Positions 310-342 (EDEHSDHSHHHKHHHHHHDHQHLQHPHNHTNGR) are disordered. Over residues 316-339 (HSHHHKHHHHHHDHQHLQHPHNHT) the composition is skewed to basic residues. The chain crosses the membrane as a helical span at residues 354-374 (LGGFLSITLISLLALVGVVLI). Topologically, residues 375–385 (PLMNRVCFNFL) are cytoplasmic. The chain crosses the membrane as a helical span at residues 386–406 (LSFLVALAVGTLSGDALLHLI). Over 407-430 (PHSQGHHHHGHSEEHAEEEDSLRP) the chain is Extracellular. Residues 431–451 (VWTGLTALSGVYIMFLIEHFL) form a helical membrane-spanning segment. Residues 452–644 (TLGKMYKDKN…LKAGMSVRQA (193 aa)) lie on the Cytoplasmic side of the membrane. The helical transmembrane segment at 645–665 (MLYNLLSALMGYLGMIIGILI) threads the bilayer. Over 666–671 (GHYAEN) the chain is Extracellular. The helical transmembrane segment at 672-692 (VATWIFALTAGLFMYVALVDM) threads the bilayer. Residues 693–710 (VPEMLHNDASEAGFSHYG) are Cytoplasmic-facing. Residues 711–731 (FFLLQNAGILLGFGIMLIIAV) form a helical membrane-spanning segment. Over 732–742 (FEDRIQLDLGY) the chain is Extracellular.

Belongs to the ZIP transporter (TC 2.A.5) family. Cleaved on the N-terminus before locating to the plasma membrane. In terms of processing, N-glycosylated.

It localises to the cell membrane. It catalyses the reaction Zn(2+)(in) = Zn(2+)(out). Functionally, acts as a zinc-influx transporter which plays a role in zinc homeostasis and in the induction of epithelial-to-mesenchymal transition (EMT). The polypeptide is Zinc transporter ZIP6 (Danio rerio (Zebrafish)).